The chain runs to 348 residues: Flap endonuclease 1 (348 aa).

An N-domain region spans residues 1-98; it reads MGLAELRELI…ETLERRRERK (98 aa). Positions 28, 80, 149, 151, 170, 172, and 234 each coordinate Mg(2+). The tract at residues 113–256 is I-domain; the sequence is EREKYARQVA…RALQLIRKYG (144 aa). An interaction with PCNA region spans residues 340–348; the sequence is RQETLDAFF.

It belongs to the XPG/RAD2 endonuclease family. FEN1 subfamily. In terms of assembly, interacts with PCNA. PCNA stimulates the nuclease activity without altering cleavage specificity. Mg(2+) serves as cofactor.

In terms of biological role, structure-specific nuclease with 5'-flap endonuclease and 5'-3' exonuclease activities involved in DNA replication and repair. During DNA replication, cleaves the 5'-overhanging flap structure that is generated by displacement synthesis when DNA polymerase encounters the 5'-end of a downstream Okazaki fragment. Binds the unpaired 3'-DNA end and kinks the DNA to facilitate 5' cleavage specificity. Cleaves one nucleotide into the double-stranded DNA from the junction in flap DNA, leaving a nick for ligation. Also involved in the base excision repair (BER) pathway. Acts as a genome stabilization factor that prevents flaps from equilibrating into structures that lead to duplications and deletions. Also possesses 5'-3' exonuclease activity on nicked or gapped double-stranded DNA. In Methanopyrus kandleri (strain AV19 / DSM 6324 / JCM 9639 / NBRC 100938), this protein is Flap endonuclease 1.